The chain runs to 489 residues: GTPase Der (489 aa).

EngA-type G domains follow at residues 30–199 (PVVS…KDKP) and 227–403 (FRLA…SRSH). Residues 36–43 (GRQNVGKS), 85–89 (DTPGL), 151–154 (NKAD), 233–240 (GKPNSGKS), 280–284 (DTAGI), and 345–348 (NKWD) contribute to the GTP site. The region spanning 404–488 (RKVSTSELNK…PIRLEFRSDR (85 aa)) is the KH-like domain.

The protein belongs to the TRAFAC class TrmE-Era-EngA-EngB-Septin-like GTPase superfamily. EngA (Der) GTPase family. As to quaternary structure, associates with the 50S ribosomal subunit.

In terms of biological role, GTPase that plays an essential role in the late steps of ribosome biogenesis. The polypeptide is GTPase Der (Leptospira interrogans serogroup Icterohaemorrhagiae serovar copenhageni (strain Fiocruz L1-130)).